The primary structure comprises 318 residues: Transaldolase (318 aa).

Residue lysine 132 is the Schiff-base intermediate with substrate of the active site.

Belongs to the transaldolase family. Type 1 subfamily. As to quaternary structure, homodimer.

It is found in the cytoplasm. It catalyses the reaction D-sedoheptulose 7-phosphate + D-glyceraldehyde 3-phosphate = D-erythrose 4-phosphate + beta-D-fructose 6-phosphate. It functions in the pathway carbohydrate degradation; pentose phosphate pathway; D-glyceraldehyde 3-phosphate and beta-D-fructose 6-phosphate from D-ribose 5-phosphate and D-xylulose 5-phosphate (non-oxidative stage): step 2/3. Transaldolase is important for the balance of metabolites in the pentose-phosphate pathway. This is Transaldolase from Shewanella baltica (strain OS195).